The primary structure comprises 199 residues: Adenylyl-sulfate kinase (199 aa).

34–41 (GLSGSGKS) serves as a coordination point for ATP. Ser108 serves as the catalytic Phosphoserine intermediate.

Belongs to the APS kinase family.

The enzyme catalyses adenosine 5'-phosphosulfate + ATP = 3'-phosphoadenylyl sulfate + ADP + H(+). It functions in the pathway sulfur metabolism; hydrogen sulfide biosynthesis; sulfite from sulfate: step 2/3. Catalyzes the synthesis of activated sulfate. This chain is Adenylyl-sulfate kinase, found in Oceanobacillus iheyensis (strain DSM 14371 / CIP 107618 / JCM 11309 / KCTC 3954 / HTE831).